Here is a 510-residue protein sequence, read N- to C-terminus: Probable gamma-aminobutyrate transaminase 3, mitochondrial (510 aa).

The transit peptide at 1–41 (MICRSLLLLRSNAASKASSIVKHVAATGCLPEYSSEAPARY) directs the protein to the mitochondrion. 166 to 167 (GS) lines the pyridoxal 5'-phosphate pocket. Tyrosine 199 is a substrate binding site. Aspartate 306 is a pyridoxal 5'-phosphate binding site. Position 335 (lysine 335) interacts with substrate. N6-(pyridoxal phosphate)lysine is present on lysine 335.

Belongs to the class-III pyridoxal-phosphate-dependent aminotransferase family.

It is found in the mitochondrion. It carries out the reaction 4-aminobutanoate + pyruvate = succinate semialdehyde + L-alanine. The enzyme catalyses 4-aminobutanoate + glyoxylate = succinate semialdehyde + glycine. In terms of biological role, transaminase that degrades gamma-amino butyric acid (GABA). The sequence is that of Probable gamma-aminobutyrate transaminase 3, mitochondrial from Oryza sativa subsp. indica (Rice).